A 325-amino-acid chain; its full sequence is Olfactory receptor 10AC1 (325 aa).

At 1 to 26 the chain is on the extracellular side; it reads MDSPSNATVPCGFLLQGFSEFPHLRP. Asn6 is a glycosylation site (N-linked (GlcNAc...) asparagine). Residues 27–47 traverse the membrane as a helical segment; that stretch reads VLFLLLLGVHLATLGGNLLIL. The Cytoplasmic portion of the chain corresponds to 48–57; that stretch reads VAVASMPSRQ. Residues 58–78 traverse the membrane as a helical segment; sequence PMLLFLCQLSAIELCYTLVVV. Over 79-101 the chain is Extracellular; that stretch reads PRSLVDLSTPGHRRGSPISFLSC. A helical membrane pass occupies residues 102 to 122; sequence AFQMQMFVALGGAECFLLAAM. Residues 123-147 lie on the Cytoplasmic side of the membrane; sequence AYDRYVAICHPLRYAAVVTPGLCAR. Residues 148-168 traverse the membrane as a helical segment; the sequence is LALACCLRGLAVSVGLTVAIF. Over 169–171 the chain is Extracellular; the sequence is HLP. The helical transmembrane segment at 172-192 threads the bilayer; sequence FCGSRLLLHFFCDITALLHLA. At 193–200 the chain is on the cytoplasmic side; it reads CTRSYADE. A helical membrane pass occupies residues 201 to 221; that stretch reads LPLLGACLVLLLLPSVLILAS. Over 222–243 the chain is Extracellular; that stretch reads YGAIAAALRRLRCPKGRGKAAS. A helical transmembrane segment spans residues 244–264; the sequence is TCALHLAVTFLHYGCATFMYV. The Cytoplasmic portion of the chain corresponds to 265–325; the sequence is RPRASYSPRL…QAPGGDLREL (61 aa).

It belongs to the G-protein coupled receptor 1 family.

It localises to the cell membrane. Its function is as follows. Odorant receptor. The polypeptide is Olfactory receptor 10AC1 (OR10AC1) (Homo sapiens (Human)).